The sequence spans 248 residues: 14-3-3-like protein 2 (248 aa).

This sequence belongs to the 14-3-3 family. In terms of assembly, interacts with daf-16. Interacts with sir-2.1. Interacts with hcf-1.

The protein resides in the cytoplasm. It is found in the nucleus. Its function is as follows. Required for extension of lifespan by sir-2.1. Required to modulate lifespan, in concert with hcf-1, acting redundantly with 14-3-3-like protein par-5. Promotes nuclear export of yap-1. Negatively regulates the transcriptional activity of daf-16 by sequestering it to the cytoplasm. The polypeptide is 14-3-3-like protein 2 (Caenorhabditis elegans).